A 195-amino-acid polypeptide reads, in one-letter code: Probable septum site-determining protein MinC (195 aa).

This sequence belongs to the MinC family. As to quaternary structure, interacts with MinD and FtsZ.

Cell division inhibitor that blocks the formation of polar Z ring septums. Rapidly oscillates between the poles of the cell to destabilize FtsZ filaments that have formed before they mature into polar Z rings. Prevents FtsZ polymerization. This chain is Probable septum site-determining protein MinC, found in Helicobacter pylori (strain G27).